Here is a 208-residue protein sequence, read N- to C-terminus: Pyridoxine/pyridoxamine 5'-phosphate oxidase (208 aa).

FMN is bound by residues 53–58 (RTVLLK), 68–69 (YS), lysine 75, and glutamine 100. A substrate-binding site is contributed by lysine 58. Residues tyrosine 118, arginine 122, and serine 126 each coordinate substrate. Residues 135-136 (QS) and tryptophan 180 contribute to the FMN site. A substrate-binding site is contributed by 186–188 (RLH). FMN is bound at residue arginine 190.

It belongs to the pyridoxamine 5'-phosphate oxidase family. In terms of assembly, homodimer. It depends on FMN as a cofactor.

The enzyme catalyses pyridoxamine 5'-phosphate + O2 + H2O = pyridoxal 5'-phosphate + H2O2 + NH4(+). It carries out the reaction pyridoxine 5'-phosphate + O2 = pyridoxal 5'-phosphate + H2O2. It functions in the pathway cofactor metabolism; pyridoxal 5'-phosphate salvage; pyridoxal 5'-phosphate from pyridoxamine 5'-phosphate: step 1/1. Its pathway is cofactor metabolism; pyridoxal 5'-phosphate salvage; pyridoxal 5'-phosphate from pyridoxine 5'-phosphate: step 1/1. In terms of biological role, catalyzes the oxidation of either pyridoxine 5'-phosphate (PNP) or pyridoxamine 5'-phosphate (PMP) into pyridoxal 5'-phosphate (PLP). This chain is Pyridoxine/pyridoxamine 5'-phosphate oxidase, found in Xylella fastidiosa (strain 9a5c).